We begin with the raw amino-acid sequence, 224 residues long: Phosphoribosyltransferase domain-containing protein 1 (224 aa).

Glu140 and Asp141 together coordinate Mg(2+). Residues 140–148 (EDIINTGRT), Lys172, 193–194 (FV), and Asp200 contribute to the GMP site. Residue Asp200 participates in Mg(2+) binding.

This sequence belongs to the purine/pyrimidine phosphoribosyltransferase family.

In Xenopus tropicalis (Western clawed frog), this protein is Phosphoribosyltransferase domain-containing protein 1 (prtfdc1).